A 287-amino-acid chain; its full sequence is tRNA selenocysteine 1-associated protein 1 (287 aa).

RRM domains are found at residues alanine 3–tyrosine 86 and tyrosine 96–proline 175.

The protein belongs to the RRM TRSPAP family. Component of the tRNA(Sec) complex composed at least of EEFSEC, SECISBP2, SEPHS1, SEPSECS, TRNAU1AP and tRNA(Sec). Associates with mRNP and/or polysomes. Found in a complex with tRNA(Sec). Interacts with SEPSECS. As to expression, ubiquitous.

It localises to the nucleus. The protein resides in the cytoplasm. Its function is as follows. Involved in the early steps of selenocysteine biosynthesis and tRNA(Sec) charging to the later steps resulting in the cotranslational incorporation of selenocysteine into selenoproteins. Stabilizes the SECISBP2, EEFSEC and tRNA(Sec) complex. May be involved in the methylation of tRNA(Sec). Enhances efficiency of selenoproteins synthesis. This Rattus norvegicus (Rat) protein is tRNA selenocysteine 1-associated protein 1 (Trnau1ap).